The chain runs to 697 residues: uncharacterized protein (697 aa).

The next 14 helical transmembrane spans lie at 65–85, 106–126, 131–151, 163–183, 194–214, 227–247, 286–306, 316–336, 361–381, 394–414, 419–439, 450–470, 487–507, and 558–578; these read PVRN…VGIY, CTFR…LHNF, YRQS…EKAI, DAAL…DINE, LSSY…VPLG, TSAT…TASI, STNA…ANKD, PVTD…VLLE, SDEI…PEGV, MFEL…MAWE, ERML…EPYH, SVKR…YLAI, QGSQ…YKVW, and TSAG…HHRQ. The tract at residues 246–321 is disordered; that stretch reads SINVRTSATT…NRFHPVTDIN (76 aa). The span at 251 to 298 shows a compositional bias: low complexity; the sequence is TSATTTESTNSNTNATTTESTNSSTNATTTASTNSSTNATTTESTNAS. Basic and acidic residues predominate over residues 299–321; it reads AKEDANKDGNAEDNRFHPVTDIN.

The protein resides in the membrane. This is an uncharacterized protein from Saccharomyces cerevisiae (strain ATCC 204508 / S288c) (Baker's yeast).